The primary structure comprises 1128 residues: Cordon-bleu protein-like 1 (1128 aa).

The segment at 1-35 (MDGRTPRPQDAPARRKPKAKAPLPPAETKYTDVSS) is disordered. Thr-139 carries the post-translational modification Phosphothreonine. 3 positions are modified to phosphoserine: Ser-204, Ser-222, and Ser-256. Disordered stretches follow at residues 249–309 (KKRD…VPQD), 325–441 (MSVD…SPKS), and 454–499 (TLKN…TSNG). At Thr-260 the chain carries Phosphothreonine. Residues 270–286 (FTRSNTISKPYISNTLP) show a composition bias toward polar residues. Ser-273 carries the post-translational modification Phosphoserine. Thr-284 bears the Phosphothreonine mark. Residues 291-296 (KKRRAP) carry the KKRRAP 1 motif. Residues Ser-326, Ser-333, Ser-344, and Ser-356 each carry the phosphoserine modification. Residues 345-357 (LQLSSMSAGNSSL) show a composition bias toward polar residues. The KKRRAP 2 motif lies at 360–365 (TKRKAP). Polar residues predominate over residues 397-415 (SEANSPEELSSPAGISSDY). Acidic residues predominate over residues 416–425 (SLEEIDEKEE). 5 positions are modified to phosphoserine: Ser-438, Ser-441, Ser-461, Ser-471, and Ser-474. The segment covering 475 to 488 (MEEKQETKSTDGQE) has biased composition (basic and acidic residues). Phosphoserine is present on residues Ser-563, Ser-584, Ser-786, Ser-813, Ser-814, and Ser-821. Disordered stretches follow at residues 780–840 (TEDS…PFAP), 882–964 (SAAA…SQVS), 995–1081 (RSQS…PEQM), and 1103–1128 (IPSN…QDGH). A compositionally biased stretch (basic and acidic residues) spans 899 to 908 (LTNKEAERDM). A phosphoserine mark is found at Ser-911, Ser-917, Ser-947, Ser-1069, and Ser-1070. Polar residues-rich tracts occupy residues 1045-1081 (SAHN…PEQM) and 1103-1122 (IPSN…SMSP). The 21-residue stretch at 1081–1101 (MRQSLLTAIRSGEAAAKLKRV) folds into the WH2 domain. Ser-1121 carries the phosphoserine modification.

The chain is Cordon-bleu protein-like 1 from Homo sapiens (Human).